A 494-amino-acid polypeptide reads, in one-letter code: Ribose import ATP-binding protein RbsA (494 aa).

2 consecutive ABC transporter domains span residues 3–240 and 250–494; these read IEMK…VGRS and SQIS…TGGE. Position 35–42 (35–42) interacts with ATP; that stretch reads GENGAGKS.

It belongs to the ABC transporter superfamily. Ribose importer (TC 3.A.1.2.1) family. In terms of assembly, the complex is composed of an ATP-binding protein (RbsA), two transmembrane proteins (RbsC) and a solute-binding protein (RbsB).

It is found in the cell membrane. The catalysed reaction is D-ribose(out) + ATP + H2O = D-ribose(in) + ADP + phosphate + H(+). Functionally, part of the ABC transporter complex RbsABC involved in ribose import. Responsible for energy coupling to the transport system. The chain is Ribose import ATP-binding protein RbsA from Bacillus cereus (strain ZK / E33L).